The following is a 438-amino-acid chain: tRNA modification GTPase MnmE (438 aa).

Positions 20, 78, and 117 each coordinate (6S)-5-formyl-5,6,7,8-tetrahydrofolate. One can recognise a TrmE-type G domain in the interval Gly214–Tyr359. Position 224 (Asn224) interacts with K(+). Residues Asn224–Thr229, Thr243–Thr249, and Asp268–Gly271 each bind GTP. Ser228 provides a ligand contact to Mg(2+). Positions 243, 245, and 248 each coordinate K(+). Position 249 (Thr249) interacts with Mg(2+). A (6S)-5-formyl-5,6,7,8-tetrahydrofolate-binding site is contributed by Lys438.

Belongs to the TRAFAC class TrmE-Era-EngA-EngB-Septin-like GTPase superfamily. TrmE GTPase family. Homodimer. Heterotetramer of two MnmE and two MnmG subunits. It depends on K(+) as a cofactor.

Its subcellular location is the cytoplasm. In terms of biological role, exhibits a very high intrinsic GTPase hydrolysis rate. Involved in the addition of a carboxymethylaminomethyl (cmnm) group at the wobble position (U34) of certain tRNAs, forming tRNA-cmnm(5)s(2)U34. The chain is tRNA modification GTPase MnmE from Ureaplasma parvum serovar 3 (strain ATCC 27815 / 27 / NCTC 11736).